A 119-amino-acid chain; its full sequence is Large ribosomal subunit protein bL20 (119 aa).

It belongs to the bacterial ribosomal protein bL20 family.

Functionally, binds directly to 23S ribosomal RNA and is necessary for the in vitro assembly process of the 50S ribosomal subunit. It is not involved in the protein synthesizing functions of that subunit. The sequence is that of Large ribosomal subunit protein bL20 from Alcanivorax borkumensis (strain ATCC 700651 / DSM 11573 / NCIMB 13689 / SK2).